A 117-amino-acid polypeptide reads, in one-letter code: MDKKSARIRRAARARHMMREQGVIRLVIHRTSRHIYAQVIAPNGSEVLATASTVEKAISEQVKYTGNKDAAAVVGKIVAERALEKGIKSVAFDRSGFKYHGRVQSLADAAREAGLQF.

This sequence belongs to the universal ribosomal protein uL18 family. In terms of assembly, part of the 50S ribosomal subunit; part of the 5S rRNA/L5/L18/L25 subcomplex. Contacts the 5S and 23S rRNAs.

This is one of the proteins that bind and probably mediate the attachment of the 5S RNA into the large ribosomal subunit, where it forms part of the central protuberance. The polypeptide is Large ribosomal subunit protein uL18 (Histophilus somni (strain 129Pt) (Haemophilus somnus)).